A 361-amino-acid chain; its full sequence is Putative F-box protein At3g19560 (361 aa).

Positions 3 to 49 (MTMMSDISQDLLEEILSRVPITSLRAVKSTCKRWKDLLNDPSFSKKY) constitute an F-box domain.

In Arabidopsis thaliana (Mouse-ear cress), this protein is Putative F-box protein At3g19560.